Consider the following 32-residue polypeptide: Delta-conotoxin-like CnVID (32 aa).

3 cysteine pairs are disulfide-bonded: Cys3-Cys18, Cys10-Cys22, and Cys17-Cys27. Pro6 and Pro14 each carry 4-hydroxyproline.

This sequence belongs to the conotoxin O1 superfamily. As to expression, expressed by the venom duct.

Its subcellular location is the secreted. Delta-conotoxins bind to site 6 of voltage-gated sodium channels (Nav) and inhibit the inactivation process. This toxin acts on Nav1.2/SCN2A, Nav1.3/SCN3A and Nav1.6/SCN8A (EC(50)=1.7 uM). The polypeptide is Delta-conotoxin-like CnVID (Conus consors (Singed cone)).